A 274-amino-acid chain; its full sequence is Cytochrome b-c1 complex subunit Rieske, mitochondrial (274 aa).

Topologically, residues 79-103 are mitochondrial matrix; that stretch reads SHTDVKVPDFYDYRRLEVLDSTKSS. A helical transmembrane segment spans residues 104–140; that stretch reads RESSEARKGFSYLVTAVTTVGVAYAAKNVVTQFISSM. Residues 141-274 lie on the Mitochondrial intermembrane side of the membrane; sequence SASADVLAMA…FTGDDVVVVG (134 aa). Positions 187–272 constitute a Rieske domain; it reads EAAVELSQLR…YEFTGDDVVV (86 aa). Cysteine 217, histidine 219, cysteine 236, histidine 239, and serine 241 together coordinate [2Fe-2S] cluster. A disulfide bridge connects residues cysteine 222 and cysteine 238.

The protein belongs to the Rieske iron-sulfur protein family. In terms of assembly, component of the ubiquinol-cytochrome c oxidoreductase (cytochrome b-c1 complex, complex III, CIII), a multisubunit enzyme composed of 11 subunits. The complex is composed of 3 respiratory subunits cytochrome b, cytochrome c1 and Rieske protein UQCRFS1, 2 core protein subunits UQCRC1/QCR1 and UQCRC2/QCR2, and 6 low-molecular weight protein subunits UQCRH/QCR6, UQCRB/QCR7, UQCRQ/QCR8, UQCR10/QCR9, UQCR11/QCR10 and subunit 9, the cleavage product of Rieske protein UQCRFS1. The complex exists as an obligatory dimer and forms supercomplexes (SCs) in the inner mitochondrial membrane with NADH-ubiquinone oxidoreductase (complex I, CI) and cytochrome c oxidase (complex IV, CIV), resulting in different assemblies (supercomplex SCI(1)III(2)IV(1) and megacomplex MCI(2)III(2)IV(2)). Incorporation of the Rieske protein UQCRFS1 is the penultimate step in complex III assembly. Interacts with TTC19, which is involved in the clearance of UQCRFS1 fragments. Component of the ubiquinol-cytochrome c oxidoreductase (cytochrome b-c1 complex, complex III, CIII). Subunit 9 corresponds to the mitochondrial targeting sequence (MTS) of Rieske protein UQCRFS1. It is retained after processing and incorporated inside complex III, where it remains bound to the complex and localizes between the 2 core subunits UQCRC1/QCR1 and UQCRC2/QCR2. It depends on [2Fe-2S] cluster as a cofactor. Proteolytic processing is necessary for the correct insertion of UQCRFS1 in the complex III dimer. Several fragments are generated during UQCRFS1 insertion, most probably due to the endogenous matrix-processing peptidase (MPP) activity of the 2 core protein subunits UQCRC1/QCR1 and UQCRC2/QCR2, which are homologous to the 2 mitochondrial-processing peptidase (MPP) subunits beta-MPP and alpha-MPP respectively. The action of the protease is also necessary for the clearance of the UQCRFS1 fragments.

The protein resides in the mitochondrion inner membrane. It carries out the reaction a quinol + 2 Fe(III)-[cytochrome c](out) = a quinone + 2 Fe(II)-[cytochrome c](out) + 2 H(+)(out). In terms of biological role, component of the ubiquinol-cytochrome c oxidoreductase, a multisubunit transmembrane complex that is part of the mitochondrial electron transport chain which drives oxidative phosphorylation. The respiratory chain contains 3 multisubunit complexes succinate dehydrogenase (complex II, CII), ubiquinol-cytochrome c oxidoreductase (cytochrome b-c1 complex, complex III, CIII) and cytochrome c oxidase (complex IV, CIV), that cooperate to transfer electrons derived from NADH and succinate to molecular oxygen, creating an electrochemical gradient over the inner membrane that drives transmembrane transport and the ATP synthase. The cytochrome b-c1 complex catalyzes electron transfer from ubiquinol to cytochrome c, linking this redox reaction to translocation of protons across the mitochondrial inner membrane, with protons being carried across the membrane as hydrogens on the quinol. In the process called Q cycle, 2 protons are consumed from the matrix, 4 protons are released into the intermembrane space and 2 electrons are passed to cytochrome c. The Rieske protein is a catalytic core subunit containing a [2Fe-2S] iron-sulfur cluster. It cycles between 2 conformational states during catalysis to transfer electrons from the quinol bound in the Q(0) site in cytochrome b to cytochrome c1. Incorporation of UQCRFS1 is the penultimate step in complex III assembly. Its function is as follows. Component of the ubiquinol-cytochrome c oxidoreductase (cytochrome b-c1 complex, complex III, CIII). UQCRFS1 undergoes proteolytic processing once it is incorporated in the complex III dimer. One of the fragments, called subunit 9, corresponds to its mitochondrial targeting sequence (MTS). The proteolytic processing is necessary for the correct insertion of UQCRFS1 in the complex III dimer, but the persistence of UQCRFS1-derived fragments may prevent newly imported UQCRFS1 to be processed and assembled into complex III and is detrimental for the complex III structure and function. The chain is Cytochrome b-c1 complex subunit Rieske, mitochondrial (UQCRFS1) from Chlorocebus aethiops (Green monkey).